A 348-amino-acid polypeptide reads, in one-letter code: NADH-quinone oxidoreductase subunit H (348 aa).

A run of 8 helical transmembrane segments spans residues 25-45, 95-115, 128-148, 168-188, 204-224, 254-274, 287-307, and 327-347; these read ILFL…VAAL, FMFI…FAII, IGIL…MFGG, ISYE…TGSF, WNIF…VAVT, FFIG…CLFF, ILPP…MFVL, and VCLP…LISA.

The protein belongs to the complex I subunit 1 family. As to quaternary structure, NDH-1 is composed of 14 different subunits. Subunits NuoA, H, J, K, L, M, N constitute the membrane sector of the complex.

It localises to the cell inner membrane. It catalyses the reaction a quinone + NADH + 5 H(+)(in) = a quinol + NAD(+) + 4 H(+)(out). Functionally, NDH-1 shuttles electrons from NADH, via FMN and iron-sulfur (Fe-S) centers, to quinones in the respiratory chain. The immediate electron acceptor for the enzyme in this species is believed to be ubiquinone. Couples the redox reaction to proton translocation (for every two electrons transferred, four hydrogen ions are translocated across the cytoplasmic membrane), and thus conserves the redox energy in a proton gradient. This subunit may bind ubiquinone. The polypeptide is NADH-quinone oxidoreductase subunit H (Psychrobacter sp. (strain PRwf-1)).